Consider the following 441-residue polypeptide: C4-dicarboxylate transport protein (441 aa).

Transmembrane regions (helical) follow at residues 9-29 (SLYF…HFMP), 45-65 (LVKM…IAGM), 79-99 (LLYF…VVNV), 145-165 (AFAE…GFAL), 187-207 (FAAI…AMAF), 220-240 (LAAL…LVLG), 308-328 (IYLT…LTLT), and 356-376 (AATL…ILGI).

The protein belongs to the dicarboxylate/amino acid:cation symporter (DAACS) (TC 2.A.23) family.

The protein localises to the cell inner membrane. Functionally, responsible for the transport of dicarboxylates such as succinate, fumarate, and malate from the periplasm across the membrane. This chain is C4-dicarboxylate transport protein, found in Laribacter hongkongensis (strain HLHK9).